The following is a 114-amino-acid chain: Hydrogenase maturation factor HypA (114 aa).

Ni(2+) is bound at residue H2. The Zn(2+) site is built by C70, C73, C86, and C89.

Belongs to the HypA/HybF family.

Its function is as follows. Involved in the maturation of [NiFe] hydrogenases. Required for nickel insertion into the metal center of the hydrogenase. This Crocosphaera subtropica (strain ATCC 51142 / BH68) (Cyanothece sp. (strain ATCC 51142)) protein is Hydrogenase maturation factor HypA.